The chain runs to 375 residues: Alanine racemase (375 aa).

Lys35 functions as the Proton acceptor; specific for D-alanine in the catalytic mechanism. Lys35 bears the N6-(pyridoxal phosphate)lysine mark. A substrate-binding site is contributed by Arg130. The Proton acceptor; specific for L-alanine role is filled by Tyr253. Met305 serves as a coordination point for substrate.

It belongs to the alanine racemase family. Requires pyridoxal 5'-phosphate as cofactor.

The enzyme catalyses L-alanine = D-alanine. It functions in the pathway amino-acid biosynthesis; D-alanine biosynthesis; D-alanine from L-alanine: step 1/1. Catalyzes the interconversion of L-alanine and D-alanine. May also act on other amino acids. The chain is Alanine racemase (alr) from Ralstonia nicotianae (strain ATCC BAA-1114 / GMI1000) (Ralstonia solanacearum).